We begin with the raw amino-acid sequence, 333 residues long: NADH-ubiquinone oxidoreductase chain 2 (333 aa).

The next 10 helical transmembrane spans lie at 10-30 (WFIY…NIFI), 57-77 (LIYY…IIVY), 91-111 (FMVQ…FWMI), 121-141 (QIFL…VSMT), 143-163 (INSW…FYAN), 170-190 (KLLA…LELN), 192-212 (NMFI…ISFL), 242-262 (MYPI…MVSV), 267-287 (WILF…IIIL), and 313-333 (SYFA…LNFL).

It belongs to the complex I subunit 2 family.

The protein resides in the mitochondrion inner membrane. The catalysed reaction is a ubiquinone + NADH + 5 H(+)(in) = a ubiquinol + NAD(+) + 4 H(+)(out). Its function is as follows. Core subunit of the mitochondrial membrane respiratory chain NADH dehydrogenase (Complex I) that is believed to belong to the minimal assembly required for catalysis. Complex I functions in the transfer of electrons from NADH to the respiratory chain. The immediate electron acceptor for the enzyme is believed to be ubiquinone. The sequence is that of NADH-ubiquinone oxidoreductase chain 2 (ND2) from Apis mellifera ligustica (Common honeybee).